The primary structure comprises 614 residues: High-affinity choline transporter 1 (614 aa).

The chain crosses the membrane as a helical span at residues 6–26; that stretch reads GVVSIVLFYLLILVVGIWAGR. The Cytoplasmic portion of the chain corresponds to 27–44; sequence KKQSGNDSEEEVMLAGRS. A helical transmembrane segment spans residues 45–65; the sequence is IGLFVGIFTMTATWVGGGYIN. The Extracellular portion of the chain corresponds to 66–75; the sequence is GTAEAIYTSG. A helical membrane pass occupies residues 76 to 96; sequence LVWCQAPFGYALSLVFGGIFF. The Cytoplasmic portion of the chain corresponds to 97–119; sequence ANPMRKQGYITMLDPLQDSFGER. A helical transmembrane segment spans residues 120–140; sequence MGGLLFLPALCGEVFWAAGIL. Over 141 to 158 the chain is Extracellular; that stretch reads AALGATLSVIIDMDHRTS. The helical transmembrane segment at 159 to 179 threads the bilayer; the sequence is VILSSCIAIFYTLFGGLYSVA. Residues 180-185 lie on the Cytoplasmic side of the membrane; it reads YTDVIQ. The helical transmembrane segment at 186 to 206 threads the bilayer; that stretch reads LFCIFIGLWMCIPFAWSNEHV. Over 207 to 225 the chain is Extracellular; the sequence is GSLSDLEVDWIGHVEPKKH. A helical membrane pass occupies residues 226–246; it reads WLYIDYGLLLVFGGIPWQVYF. Residues 247 to 262 lie on the Cytoplasmic side of the membrane; it reads QRVLSSKTAGRAQLLS. A helical membrane pass occupies residues 263–283; it reads YVAAAGCILMAIPPVLIGAIA. At 284-305 the chain is on the extracellular side; sequence KATPWNETDYKGPYPLTVDETS. N-linked (GlcNAc...) asparagine glycosylation occurs at asparagine 289. The helical transmembrane segment at 306 to 326 threads the bilayer; it reads MILPMVLQYLTPDFVSFFGLG. The Cytoplasmic portion of the chain corresponds to 327 to 364; the sequence is AVSAAVMSSADSSVLSAASMFARNVYKLIFRQKASEME. The chain crosses the membrane as a helical span at residues 365–385; the sequence is IIWVMRVAIIVVGILATIMAL. Over 386-394 the chain is Extracellular; the sequence is TIPSIYGLW. Residues 395 to 415 traverse the membrane as a helical segment; the sequence is SMCSDLVYVILFPQLLMVVHF. Over 416 to 424 the chain is Cytoplasmic; the sequence is KKHCNTYGS. The chain crosses the membrane as a helical span at residues 425-445; that stretch reads LSAYIVALAIRLSGGEAILGL. Topologically, residues 446–467 are extracellular; it reads APLIKYPGYDEETKEQMFPFRT. The helical transmembrane segment at 468-488 threads the bilayer; the sequence is MAMLLSLVTLISVSWWTKMMF. Over 489 to 614 the chain is Cytoplasmic; it reads ESGKLPPSYD…PTAEQDNTAF (126 aa). A disordered region spans residues 583–614; the sequence is ATGVKPSGGGGGHLQSQSGMAMPTAEQDNTAF.

Belongs to the sodium:solute symporter (SSF) (TC 2.A.21) family.

Its subcellular location is the membrane. Imports choline from the extracellular space to the neuron with high affinity. Rate-limiting step in acetylcholine synthesis. Sodium ion and chloride ion dependent. The polypeptide is High-affinity choline transporter 1 (Drosophila melanogaster (Fruit fly)).